Reading from the N-terminus, the 183-residue chain is Adenine phosphoribosyltransferase (183 aa).

It belongs to the purine/pyrimidine phosphoribosyltransferase family. Homodimer.

It is found in the cytoplasm. It catalyses the reaction AMP + diphosphate = 5-phospho-alpha-D-ribose 1-diphosphate + adenine. It participates in purine metabolism; AMP biosynthesis via salvage pathway; AMP from adenine: step 1/1. In terms of biological role, catalyzes a salvage reaction resulting in the formation of AMP, that is energically less costly than de novo synthesis. The sequence is that of Adenine phosphoribosyltransferase from Shewanella oneidensis (strain ATCC 700550 / JCM 31522 / CIP 106686 / LMG 19005 / NCIMB 14063 / MR-1).